We begin with the raw amino-acid sequence, 269 residues long: Chymotrypsin-like elastase family member 2A (269 aa).

Residues 1-16 (MIRTLLLSTLVAGALS) form the signal peptide. Residues 17 to 28 (CGDPTYPPYVTR) constitute a propeptide, activation peptide. One can recognise a Peptidase S1 domain in the interval 29–267 (VVGGEEARPN…YIDWINSVIA (239 aa)). A disulfide bridge links cysteine 58 with cysteine 74. Catalysis depends on charge relay system residues histidine 73 and aspartate 121. 3 cysteine pairs are disulfide-bonded: cysteine 155/cysteine 222, cysteine 186/cysteine 202, and cysteine 212/cysteine 243. Serine 216 serves as the catalytic Charge relay system.

It belongs to the peptidase S1 family. Elastase subfamily. Interacts with CPA1. Interacts with SERPINA1. As to expression, expressed in pancreas. Not detected in keratinocytes. Detected in exocrine secretions of the pancreas (at protein level). Also expressed in a small fraction of cells in pancreatic islets, adrenal cortex, intestinal glands and colonic lymphoid follicles (at protein level). Detected in plasma.

The protein resides in the secreted. It carries out the reaction Preferential cleavage: Leu-|-Xaa, Met-|-Xaa and Phe-|-Xaa. Hydrolyzes elastin.. Functionally, elastase that enhances insulin signaling and might have a physiologic role in cellular glucose metabolism. Circulates in plasma and reduces platelet hyperactivation, triggers both insulin secretion and degradation, and increases insulin sensitivity. The protein is Chymotrypsin-like elastase family member 2A of Homo sapiens (Human).